Reading from the N-terminus, the 727-residue chain is BRCA1-A complex subunit RAP80 (727 aa).

Residues 1–23 (MPRRKKKIKEASESQNLEKKDLE) form a disordered region. The interval 1–101 (MPRRKKKIKE…SEQEAREVNN (101 aa)) is necessary for transcriptional repression. The segment covering 9-23 (KEASESQNLEKKDLE) has biased composition (basic and acidic residues). Lysine 20 is covalently cross-linked (Glycyl lysine isopeptide (Lys-Gly) (interchain with G-Cter in SUMO2)). Phosphoserine is present on serine 29. A Glycyl lysine isopeptide (Lys-Gly) (interchain with G-Cter in SUMO2) cross-link involves residue lysine 31. Phosphoserine is present on residues serine 44 and serine 46. Positions 45–70 (DSDGEETKEENGLQKTKTKQSNRSKC) are disordered. Residue threonine 51 is modified to Phosphothreonine. Residues 60 to 70 (TKTKQSNRSKC) show a composition bias toward basic residues. The short motif at 60–78 (TKTKQSNRSKCLAKRKVAH) is the LR motif element. Glycyl lysine isopeptide (Lys-Gly) (interchain with G-Cter in SUMO2) cross-links involve residues lysine 75 and lysine 90. UIM domains follow at residues 80–99 (SEEE…AREV) and 104–124 (EKEE…CWSS). Residues 97–103 (REVNNQE) are UIM-linker. Positions 100–200 (NNQEEKEEEL…EEPVSGSSGS (101 aa)) are necessary for interaction with NR6A1 N-terminus. A disordered region spans residues 133–206 (PLAAELSSHS…SSGSWDQSSQ (74 aa)). Serine 140 carries the post-translational modification Phosphoserine. The segment covering 176–188 (AEQRKEPWDHNEN) has biased composition (basic and acidic residues). The span at 195-206 (SGSSGSWDQSSQ) shows a compositional bias: low complexity. Residue serine 205 is modified to Phosphoserine. Residue lysine 245 forms a Glycyl lysine isopeptide (Lys-Gly) (interchain with G-Cter in SUMO2) linkage. The tract at residues 270–400 (TGGTVHYYWG…EEEPTTSRGQ (131 aa)) is AIR. Positions 326-427 (PRPPFLIQNE…SEGDNSVPTT (102 aa)) are disordered. Residues 355–364 (DEAKEERQES) show a composition bias toward basic and acidic residues. Serine 379 carries the post-translational modification Phosphoserine. Glycyl lysine isopeptide (Lys-Gly) (interchain with G-Cter in SUMO2) cross-links involve residues lysine 382 and lysine 387. The interval 400–508 (QSSQGLFVEE…ENPPPAVSSS (109 aa)) is necessary for interaction with NR6A1 C-terminus. Serine 402 bears the Phosphoserine mark. Lysine 436 participates in a covalent cross-link: Glycyl lysine isopeptide (Lys-Gly) (interchain with G-Cter in SUMO2). Serine 474 is subject to Phosphoserine. The UBZ4-type zinc finger occupies 510-537 (RVSCPLCNQDFPPTKIEQHAMYCNGLME). Residues cysteine 513, cysteine 516, histidine 528, and cysteine 532 each coordinate Zn(2+). A zinc-finger-like region region spans residues 513–590 (CPLCNQDFPP…GEYQCHVEAC (78 aa)). Glycyl lysine isopeptide (Lys-Gly) (interchain with G-Cter in SUMO2) cross-links involve residues lysine 552, lysine 570, lysine 595, and lysine 617. The segment at 607 to 654 (RPRVCAPVEGKQQQRLKKSKDKGHSQGRLLSLLEQSEHRTTGVEKKPK) is disordered. At serine 637 the chain carries Phosphoserine. Basic and acidic residues predominate over residues 641–654 (QSEHRTTGVEKKPK). Lysine 652 is covalently cross-linked (Glycyl lysine isopeptide (Lys-Gly) (interchain with G-Cter in SUMO2)). Phosphoserine is present on residues serine 665 and serine 689. Residue lysine 708 forms a Glycyl lysine isopeptide (Lys-Gly) (interchain with G-Cter in SUMO2) linkage.

This sequence belongs to the RAP80 family. As to quaternary structure, component of the ARISC complex, at least composed of UIMC1/RAP80, ABRAXAS1, BRCC3/BRCC36, BABAM2 and BABAM1/NBA1. Component of the BRCA1-A complex, at least composed of the BRCA1, BARD1, UIMC1/RAP80, ABRAXAS1, BRCC3/BRCC36, BABAM2 and BABAM1/NBA1. In the BRCA1-A complex, interacts directly with ABRAXAS1. Interacts with ESR1. Interacts with UBE2I. Interacts with NR6A1. Interacts with TSP57. Interacts with TRAIP. Post-translationally, sumoylated. Phosphorylated upon DNA damage by ATM or ATR.

It is found in the nucleus. Its function is as follows. Ubiquitin-binding protein. Specifically recognizes and binds 'Lys-63'-linked ubiquitin. Plays a central role in the BRCA1-A complex by specifically binding 'Lys-63'-linked ubiquitinated histones H2A and H2AX at DNA lesions sites, leading to target the BRCA1-BARD1 heterodimer to sites of DNA damage at double-strand breaks (DSBs). The BRCA1-A complex also possesses deubiquitinase activity that specifically removes 'Lys-63'-linked ubiquitin on histones H2A and H2AX. Also weakly binds monoubiquitin but with much less affinity than 'Lys-63'-linked ubiquitin. May interact with monoubiquitinated histones H2A and H2B; the relevance of such results is however unclear in vivo. Does not bind Lys-48'-linked ubiquitin. May indirectly act as a transcriptional repressor by inhibiting the interaction of NR6A1 with the corepressor NCOR1. This is BRCA1-A complex subunit RAP80 (Uimc1) from Mus musculus (Mouse).